Reading from the N-terminus, the 509-residue chain is MLCQPAMLLDGLLLLATMAAAQHRGPEAGGHRQIHQVRRGQCSYTFVVPEPDICQLAPTAAPEALGGSNSLQRDLPASRLHLTDWRAQRAQRAQRVSQLEKILENNTQWLLKLEQSIKVNLRSHLVQAQQDTIQNQTTTMLALGANLMNQTKAQTHKLTAVEAQVLNQTLHMKTQMLENSLSTNKLERQMLMQSRELQRLQGRNRALETRLQALEAQHQAQLNSLQEKREQLHSLLGHQTGTLANLKHNLHALSSNSSSLQQQQQQLTEFVQRLVRIVAQDQHPVSLKTPKPVFQDCAEIKRSGVNTSGVYTIYETNMTKPLKVFCDMETDGGGWTLIQHREDGSVNFQRTWEEYKEGFGNVAREHWLGNEAVHRLTSRTAYLLRVELHDWEGRQTSIQYENFQLGSERQRYSLSVNDSSSSAGRKNSLAPQGTKFSTKDMDNDNCMCKCAQMLSGGWWFDACGLSNLNGIYYSVHQHLHKINGIRWHYFRGPSYSLHGTRMMLRPMGA.

Residues 1–21 (MLCQPAMLLDGLLLLATMAAA) form the signal peptide. Residues Asn105, Asn135, Asn149, Asn167, Asn256, Asn306, Asn317, and Asn417 are each glycosylated (N-linked (GlcNAc...) asparagine). Residues 181–269 (LSTNKLERQM…LQQQQQQLTE (89 aa)) are a coiled coil. Residues 288-508 (KTPKPVFQDC…GTRMMLRPMG (221 aa)) form the Fibrinogen C-terminal domain. Residues Cys297 and Cys326 are joined by a disulfide bond. Positions 416 to 436 (VNDSSSSAGRKNSLAPQGTKF) are disordered. Cys450 and Cys463 are disulfide-bonded.

Homodimer; disulfide-linked. Interacts with TEK/TIE2. Widely expressed.

It is found in the secreted. Functionally, binds to TEK/TIE2, modulating ANGPT1 signaling. Can induce tyrosine phosphorylation of TEK/TIE2. Promotes endothelial cell survival, migration and angiogenesis. This is Angiopoietin-4 (Angpt4) from Mus musculus (Mouse).